The following is a 391-amino-acid chain: Alanine racemase (391 aa).

Lys46 serves as the catalytic Proton acceptor; specific for D-alanine. Lys46 carries the N6-(pyridoxal phosphate)lysine modification. Position 148 (Arg148) interacts with substrate. The active-site Proton acceptor; specific for L-alanine is the Tyr283. Met331 provides a ligand contact to substrate.

This sequence belongs to the alanine racemase family. It depends on pyridoxal 5'-phosphate as a cofactor.

The enzyme catalyses L-alanine = D-alanine. Its pathway is amino-acid biosynthesis; D-alanine biosynthesis; D-alanine from L-alanine: step 1/1. Catalyzes the interconversion of L-alanine and D-alanine. May also act on other amino acids. The polypeptide is Alanine racemase (alr) (Streptomyces coelicolor (strain ATCC BAA-471 / A3(2) / M145)).